A 398-amino-acid polypeptide reads, in one-letter code: Riboflavin transporter RfnT (398 aa).

Helical transmembrane passes span 13 to 35 (ILTIAQALGASSPPIVISLGGLV), 45 to 67 (LVTLPVSLFNLGLALGTLPAAFF), 74 to 91 (RNAYMLGALVGAAAGVIA), 95 to 117 (IFAASFLIFCLGTLTAGFYASYV), 137 to 156 (ISWVMVGGLVAAIVGPQLVI), 166 to 188 (MFAGSFLSQAVLGLLALPVLFML), 220 to 242 (VAAGVCSYALMTFVMTAAPIAMV), 252 to 274 (ALGIQWHVLAMFAPSFFTGKLIT), 281 to 300 (ITALGLVLIAFSAIIALGGF), 305 to 324 (FWGALIFLGIGWNFGFIGAT), 345 to 367 (FIMFGTVACASFFAGSLLHSSGW), and 372 to 389 (WLVFPIVALVLVPLILRL).

Belongs to the major facilitator superfamily.

It localises to the cell membrane. In terms of biological role, transports riboflavin into the cell. This is Riboflavin transporter RfnT from Brucella anthropi (strain ATCC 49188 / DSM 6882 / CCUG 24695 / JCM 21032 / LMG 3331 / NBRC 15819 / NCTC 12168 / Alc 37) (Ochrobactrum anthropi).